The sequence spans 359 residues: DNA integrity scanning protein DisA (359 aa).

One can recognise a DAC domain in the interval 7–145 (DPTGRAVLRA…DGRRWVLEDS (139 aa)). ATP-binding positions include Gly74, Leu92, and 105-109 (TRHRT).

This sequence belongs to the DisA family. In terms of assembly, homooctamer. It depends on Mg(2+) as a cofactor.

The catalysed reaction is 2 ATP = 3',3'-c-di-AMP + 2 diphosphate. In terms of biological role, participates in a DNA-damage check-point. DisA forms globular foci that rapidly scan along the chromosomes searching for lesions. Also has diadenylate cyclase activity, catalyzing the condensation of 2 ATP molecules into cyclic di-AMP (c-di-AMP). c-di-AMP likely acts as a signaling molecule that may couple DNA integrity with a cellular process. This chain is DNA integrity scanning protein DisA, found in Beutenbergia cavernae (strain ATCC BAA-8 / DSM 12333 / CCUG 43141 / JCM 11478 / NBRC 16432 / NCIMB 13614 / HKI 0122).